A 124-amino-acid polypeptide reads, in one-letter code: Fluoride-specific ion channel FluC (124 aa).

4 helical membrane-spanning segments follow: residues 4-24 (ILAI…LAGG), 32-52 (AFPW…GLIM), 68-88 (GLTI…YETF), and 101-121 (LNVL…IMAA). G75 and T78 together coordinate Na(+).

It belongs to the fluoride channel Fluc/FEX (TC 1.A.43) family.

The protein resides in the cell inner membrane. It catalyses the reaction fluoride(in) = fluoride(out). Na(+) is not transported, but it plays an essential structural role and its presence is essential for fluoride channel function. Fluoride-specific ion channel. Important for reducing fluoride concentration in the cell, thus reducing its toxicity. This Geobacter sulfurreducens (strain ATCC 51573 / DSM 12127 / PCA) protein is Fluoride-specific ion channel FluC.